The primary structure comprises 331 residues: tRNA(Ile)-lysidine synthase (331 aa).

29–34 lines the ATP pocket; it reads SGGPDS.

This sequence belongs to the tRNA(Ile)-lysidine synthase family.

It localises to the cytoplasm. It catalyses the reaction cytidine(34) in tRNA(Ile2) + L-lysine + ATP = lysidine(34) in tRNA(Ile2) + AMP + diphosphate + H(+). Functionally, ligates lysine onto the cytidine present at position 34 of the AUA codon-specific tRNA(Ile) that contains the anticodon CAU, in an ATP-dependent manner. Cytidine is converted to lysidine, thus changing the amino acid specificity of the tRNA from methionine to isoleucine. The protein is tRNA(Ile)-lysidine synthase of Chlorobaculum tepidum (strain ATCC 49652 / DSM 12025 / NBRC 103806 / TLS) (Chlorobium tepidum).